The chain runs to 427 residues: UDP-N-acetylglucosamine 1-carboxyvinyltransferase 1 (427 aa).

24–25 contacts phosphoenolpyruvate; the sequence is KN. A UDP-N-acetyl-alpha-D-glucosamine-binding site is contributed by Arg-97. The active-site Proton donor is the Cys-121. Cys-121 is modified (2-(S-cysteinyl)pyruvic acid O-phosphothioketal). Residues 126–130, Asp-309, and Val-331 each bind UDP-N-acetyl-alpha-D-glucosamine; that span reads RPIDL.

This sequence belongs to the EPSP synthase family. MurA subfamily.

It is found in the cytoplasm. The enzyme catalyses phosphoenolpyruvate + UDP-N-acetyl-alpha-D-glucosamine = UDP-N-acetyl-3-O-(1-carboxyvinyl)-alpha-D-glucosamine + phosphate. It functions in the pathway cell wall biogenesis; peptidoglycan biosynthesis. In terms of biological role, cell wall formation. Adds enolpyruvyl to UDP-N-acetylglucosamine. The chain is UDP-N-acetylglucosamine 1-carboxyvinyltransferase 1 from Lactococcus lactis subsp. lactis (strain IL1403) (Streptococcus lactis).